Here is a 419-residue protein sequence, read N- to C-terminus: UDP-N-acetylglucosamine 1-carboxyvinyltransferase (419 aa).

Residue 22–23 (KN) participates in phosphoenolpyruvate binding. Arg95 is a UDP-N-acetyl-alpha-D-glucosamine binding site. The Proton donor role is filled by Cys119. At Cys119 the chain carries 2-(S-cysteinyl)pyruvic acid O-phosphothioketal. Residues Asp308 and Ile330 each contribute to the UDP-N-acetyl-alpha-D-glucosamine site.

This sequence belongs to the EPSP synthase family. MurA subfamily.

The protein resides in the cytoplasm. The catalysed reaction is phosphoenolpyruvate + UDP-N-acetyl-alpha-D-glucosamine = UDP-N-acetyl-3-O-(1-carboxyvinyl)-alpha-D-glucosamine + phosphate. The protein operates within cell wall biogenesis; peptidoglycan biosynthesis. Functionally, cell wall formation. Adds enolpyruvyl to UDP-N-acetylglucosamine. This Rickettsia bellii (strain OSU 85-389) protein is UDP-N-acetylglucosamine 1-carboxyvinyltransferase.